The chain runs to 204 residues: Thymidylate kinase (204 aa).

Position 12-19 (12-19 (GVDGAGKS)) interacts with ATP.

This sequence belongs to the thymidylate kinase family.

The enzyme catalyses dTMP + ATP = dTDP + ADP. Its function is as follows. Phosphorylation of dTMP to form dTDP in both de novo and salvage pathways of dTTP synthesis. The sequence is that of Thymidylate kinase from Thiobacillus denitrificans (strain ATCC 25259 / T1).